Reading from the N-terminus, the 159-residue chain is Putative UPF0479 protein YDR545C-A (159 aa).

2 helical membrane-spanning segments follow: residues 38–58 (IVFCLPFFPALFLVPVQKVLQ) and 135–155 (VPMIWLDVFQVFFVFLVISQH).

This sequence belongs to the UPF0479 family.

It localises to the membrane. In Saccharomyces cerevisiae (strain ATCC 204508 / S288c) (Baker's yeast), this protein is Putative UPF0479 protein YDR545C-A.